A 563-amino-acid chain; its full sequence is O-fucosyltransferase 14 (563 aa).

Over residues 1-16 (MVKVSSSTTSSSSSSS) the composition is skewed to low complexity. Residues 1–25 (MVKVSSSTTSSSSSSSPDEESDLQN) form a disordered region. A helical; Signal-anchor for type II membrane protein membrane pass occupies residues 73–93 (IFIFLPIVIILIYLSTDFSNY). N-linked (GlcNAc...) asparagine glycans are attached at residues asparagine 135, asparagine 140, and asparagine 339. Substrate-binding positions include 412-414 (HFR) and 528-529 (TF).

It belongs to the glycosyltransferase GT106 family.

The protein resides in the membrane. It functions in the pathway glycan metabolism. In Arabidopsis thaliana (Mouse-ear cress), this protein is O-fucosyltransferase 14.